The following is a 311-amino-acid chain: Putative HTH-type transcriptional regulatory protein MTH_967 (311 aa).

The HTH cro/C1-type domain maps to 134–192 (LREVREEYNLSLKDLADLAHVSRKTIYKYENGLARASAETAMILEEILNIRITLSIDIF). Positions 145–164 (LKDLADLAHVSRKTIYKYEN) form a DNA-binding region, H-T-H motif.

The polypeptide is Putative HTH-type transcriptional regulatory protein MTH_967 (Methanothermobacter thermautotrophicus (strain ATCC 29096 / DSM 1053 / JCM 10044 / NBRC 100330 / Delta H) (Methanobacterium thermoautotrophicum)).